We begin with the raw amino-acid sequence, 150 residues long: Large ribosomal subunit protein bL9 (150 aa).

Belongs to the bacterial ribosomal protein bL9 family.

In terms of biological role, binds to the 23S rRNA. This is Large ribosomal subunit protein bL9 from Corynebacterium diphtheriae (strain ATCC 700971 / NCTC 13129 / Biotype gravis).